Consider the following 334-residue polypeptide: Transcription factor MYB92 (334 aa).

HTH myb-type domains are found at residues 9–61 (DSGL…TNYL) and 62–116 (RPDI…KKKL). 2 DNA-binding regions (H-T-H motif) span residues 37-61 (WRAL…TNYL) and 89-112 (WSTI…NTHL).

As to quaternary structure, interacts with FBX5. Highly expressed in roots and at lower levels in stems, flowers and siliques.

It is found in the nucleus. In terms of biological role, probable transcription factor. The protein is Transcription factor MYB92 of Arabidopsis thaliana (Mouse-ear cress).